We begin with the raw amino-acid sequence, 232 residues long: Ribose-5-phosphate isomerase A (232 aa).

Residues 29 to 32, 84 to 87, and 97 to 100 each bind substrate; these read TGST, DGAD, and KGGG. Glu106 serves as the catalytic Proton acceptor. Lys124 contributes to the substrate binding site.

Belongs to the ribose 5-phosphate isomerase family. As to quaternary structure, homodimer.

The enzyme catalyses aldehydo-D-ribose 5-phosphate = D-ribulose 5-phosphate. Its pathway is carbohydrate degradation; pentose phosphate pathway; D-ribose 5-phosphate from D-ribulose 5-phosphate (non-oxidative stage): step 1/1. Its function is as follows. Catalyzes the reversible conversion of ribose-5-phosphate to ribulose 5-phosphate. The polypeptide is Ribose-5-phosphate isomerase A (Brucella suis biovar 1 (strain 1330)).